Consider the following 399-residue polypeptide: tRNA-specific 2-thiouridylase MnmA (399 aa).

Residues Ala-18–Ser-25 and Leu-44 each bind ATP. Cys-112 (nucleophile) is an active-site residue. Cysteines 112 and 213 form a disulfide. Position 136 (Gly-136) interacts with ATP. The interval Arg-163–Gln-165 is interaction with tRNA. Cys-213 functions as the Cysteine persulfide intermediate in the catalytic mechanism.

Belongs to the MnmA/TRMU family.

It localises to the cytoplasm. It catalyses the reaction S-sulfanyl-L-cysteinyl-[protein] + uridine(34) in tRNA + AH2 + ATP = 2-thiouridine(34) in tRNA + L-cysteinyl-[protein] + A + AMP + diphosphate + H(+). Functionally, catalyzes the 2-thiolation of uridine at the wobble position (U34) of tRNA, leading to the formation of s(2)U34. This is tRNA-specific 2-thiouridylase MnmA from Rhizobium rhizogenes (strain K84 / ATCC BAA-868) (Agrobacterium radiobacter).